Here is an 802-residue protein sequence, read N- to C-terminus: Leucine--tRNA ligase (802 aa).

Residues 40–51 (PYPSGAGLHVGH) carry the 'HIGH' region motif. Positions 576–580 (KMSKS) match the 'KMSKS' region motif. Position 579 (Lys579) interacts with ATP.

It belongs to the class-I aminoacyl-tRNA synthetase family.

It localises to the cytoplasm. It carries out the reaction tRNA(Leu) + L-leucine + ATP = L-leucyl-tRNA(Leu) + AMP + diphosphate. In Bacillus cereus (strain ATCC 10987 / NRS 248), this protein is Leucine--tRNA ligase.